The chain runs to 436 residues: Trigger factor (436 aa).

In terms of domain architecture, PPIase FKBP-type spans G161 to P246.

This sequence belongs to the FKBP-type PPIase family. Tig subfamily.

It localises to the cytoplasm. It catalyses the reaction [protein]-peptidylproline (omega=180) = [protein]-peptidylproline (omega=0). Involved in protein export. Acts as a chaperone by maintaining the newly synthesized protein in an open conformation. Functions as a peptidyl-prolyl cis-trans isomerase. This is Trigger factor from Azotobacter vinelandii (strain DJ / ATCC BAA-1303).